We begin with the raw amino-acid sequence, 792 residues long: Cadherin-11 (792 aa).

An N-terminal signal peptide occupies residues 1-22 (MKEDNCLHAALICLGMLYYSHA). A propeptide spanning residues 23–53 (ITTEKLNHVRPSLHGHHEKGKEGQVLHRSKR) is cleaved from the precursor. 5 Cadherin domains span residues 54–159 (GWVW…PPEF), 160–268 (LHEN…PPKF), 269–383 (PQSV…PPVF), 384–486 (LKPS…DNAP), and 487–608 (KFAA…YILN). Over 54-613 (GWVWNQFFVI…AYILNAGLST (560 aa)) the chain is Extracellular. N-linked (GlcNAc...) asparagine glycans are attached at residues Asn-455, Asn-536, and Asn-594. The helical transmembrane segment at 614 to 634 (GALIAILACIVILLVIVVLFV) threads the bilayer. The Cytoplasmic segment spans residues 635-792 (TLKRQKKEPL…GSKDTFDDDS (158 aa)).

It is found in the cell membrane. Its function is as follows. Cadherins are calcium-dependent cell adhesion proteins. They preferentially interact with themselves in a homophilic manner in connecting cells; cadherins may thus contribute to the sorting of heterogeneous cell types. Required for proper focal adhesion assembly. Involved in the regulation of cell migration. The protein is Cadherin-11 (CDH11) of Gallus gallus (Chicken).